A 162-amino-acid chain; its full sequence is Xanthine-guanine phosphoribosyltransferase (162 aa).

5-phospho-alpha-D-ribose 1-diphosphate contacts are provided by residues 43–44 and 94–102; these read RG and DDLVDTGTT. Asp-95 serves as a coordination point for Mg(2+). Asp-98 and Ile-141 together coordinate guanine. The xanthine site is built by Asp-98 and Ile-141. GMP-binding positions include 98–102 and 140–141; these read DTGTT and WI.

The protein belongs to the purine/pyrimidine phosphoribosyltransferase family. XGPT subfamily. In terms of assembly, homotetramer. It depends on Mg(2+) as a cofactor.

It localises to the cell inner membrane. The catalysed reaction is GMP + diphosphate = guanine + 5-phospho-alpha-D-ribose 1-diphosphate. It carries out the reaction XMP + diphosphate = xanthine + 5-phospho-alpha-D-ribose 1-diphosphate. It catalyses the reaction IMP + diphosphate = hypoxanthine + 5-phospho-alpha-D-ribose 1-diphosphate. It functions in the pathway purine metabolism; GMP biosynthesis via salvage pathway; GMP from guanine: step 1/1. Its pathway is purine metabolism; XMP biosynthesis via salvage pathway; XMP from xanthine: step 1/1. In terms of biological role, purine salvage pathway enzyme that catalyzes the transfer of the ribosyl-5-phosphate group from 5-phospho-alpha-D-ribose 1-diphosphate (PRPP) to the N9 position of the 6-oxopurines guanine and xanthine to form the corresponding ribonucleotides GMP (guanosine 5'-monophosphate) and XMP (xanthosine 5'-monophosphate), with the release of PPi. To a lesser extent, also acts on hypoxanthine. The sequence is that of Xanthine-guanine phosphoribosyltransferase from Oleidesulfovibrio alaskensis (strain ATCC BAA-1058 / DSM 17464 / G20) (Desulfovibrio alaskensis).